The chain runs to 548 residues: Chaperonin GroEL (548 aa).

ATP-binding positions include 29–32, K50, 86–90, G413, 479–481, and D496; these read TLGP, DGTTT, and NAA.

The protein belongs to the chaperonin (HSP60) family. In terms of assembly, forms a cylinder of 14 subunits composed of two heptameric rings stacked back-to-back. Interacts with the co-chaperonin GroES.

It is found in the cytoplasm. It carries out the reaction ATP + H2O + a folded polypeptide = ADP + phosphate + an unfolded polypeptide.. Its function is as follows. Together with its co-chaperonin GroES, plays an essential role in assisting protein folding. The GroEL-GroES system forms a nano-cage that allows encapsulation of the non-native substrate proteins and provides a physical environment optimized to promote and accelerate protein folding. The polypeptide is Chaperonin GroEL (Deinococcus radiodurans (strain ATCC 13939 / DSM 20539 / JCM 16871 / CCUG 27074 / LMG 4051 / NBRC 15346 / NCIMB 9279 / VKM B-1422 / R1)).